We begin with the raw amino-acid sequence, 767 residues long: Dipeptidyl peptidase 4 (767 aa).

Residues 1–6 lie on the Cytoplasmic side of the membrane; that stretch reads MKTPWK. Residues 7-28 traverse the membrane as a helical; Signal-anchor for type II membrane protein segment; that stretch reads VLLGLLGVAALVTIITVPVVLL. Topologically, residues 29–767 are extracellular; sequence NKDEAAADSR…HFLQQCFSLR (739 aa). N-linked (GlcNAc...) asparagine glycosylation is found at Asn83, Asn90, Asn148, Asn217, Asn227, and Asn319. Disulfide bonds link Cys326–Cys337, Cys383–Cys395, Cys445–Cys448, and Cys455–Cys473. N-linked (GlcNAc...) asparagine glycosylation is present at Asn521. The Charge relay system role is filled by Ser631. Residues Cys650 and Cys763 are joined by a disulfide bond. Asn686 carries an N-linked (GlcNAc...) asparagine glycan. Residues Asp709 and His741 each act as charge relay system in the active site.

It belongs to the peptidase S9B family. DPPIV subfamily. In terms of assembly, monomer. Homodimer. Heterodimer with Seprase (FAP). Requires homodimerization for optimal dipeptidyl peptidase activity and T-cell costimulation. Found in a membrane raft complex, at least composed of BCL10, CARD11, DPP4 and IKBKB. Associates with collagen. Interacts with PTPRC; the interaction is enhanced in an interleukin-12-dependent manner in activated lymphocytes. Interacts (via extracellular domain) with ADA; does not inhibit its dipeptidyl peptidase activity. Interacts with CAV1 (via the N-terminus); the interaction is direct. Interacts (via cytoplasmic tail) with CARD11 (via PDZ domain); its homodimerization is necessary for interaction with CARD11. Interacts with IGF2R; the interaction is direct. Interacts with GPC3. Post-translationally, the soluble form (Dipeptidyl peptidase 4 soluble form also named SDPP) derives from the membrane form (Dipeptidyl peptidase 4 membrane form also named MDPP) by proteolytic processing. N- and O-Glycosylated. In terms of processing, phosphorylated. Mannose 6-phosphate residues in the carbohydrate moiety are necessary for interaction with IGF2R in activated T-cells. Mannose 6-phosphorylation is induced during T-cell activation. In terms of tissue distribution, expressed in bile ducts and other epithelial brush borders (small intestine, kidney, colon, pancreatic duct); acinar structures in salivary glands; endothelial structures and T cell areas in thymus, spleen and lymph node.

It is found in the secreted. It localises to the cell membrane. The protein resides in the apical cell membrane. Its subcellular location is the cell projection. The protein localises to the invadopodium membrane. It is found in the lamellipodium membrane. It localises to the cell junction. The protein resides in the membrane raft. It catalyses the reaction Release of an N-terminal dipeptide, Xaa-Yaa-|-Zaa-, from a polypeptide, preferentially when Yaa is Pro, provided Zaa is neither Pro nor hydroxyproline.. Inhibited by GPC3 and diprotin A. Functionally, cell surface glycoprotein receptor involved in the costimulatory signal essential for T-cell receptor (TCR)-mediated T-cell activation. Acts as a positive regulator of T-cell coactivation, by binding at least ADA, CAV1, IGF2R, and PTPRC. Its binding to CAV1 and CARD11 induces T-cell proliferation and NF-kappa-B activation in a T-cell receptor/CD3-dependent manner. Its interaction with ADA also regulates lymphocyte-epithelial cell adhesion. In association with FAP is involved in the pericellular proteolysis of the extracellular matrix (ECM), the migration and invasion of endothelial cells into the ECM. May be involved in the promotion of lymphatic endothelial cells adhesion, migration and tube formation. When overexpressed, enhanced cell proliferation, a process inhibited by GPC3. Also acts as a serine exopeptidase with a dipeptidyl peptidase activity that regulates various physiological processes by cleaving peptides in the circulation, including many chemokines, mitogenic growth factors, neuropeptides and peptide hormones. Removes N-terminal dipeptides sequentially from polypeptides having unsubstituted N-termini provided that the penultimate residue is proline. This Rattus norvegicus (Rat) protein is Dipeptidyl peptidase 4 (Dpp4).